The following is a 434-amino-acid chain: Serine--tRNA ligase (434 aa).

L-serine is bound at residue 239–241; sequence TAE. Position 270 to 272 (270 to 272) interacts with ATP; that stretch reads RSE. E293 provides a ligand contact to L-serine. 357 to 360 contributes to the ATP binding site; it reads EISS. An L-serine-binding site is contributed by S393.

The protein belongs to the class-II aminoacyl-tRNA synthetase family. Type-1 seryl-tRNA synthetase subfamily. Homodimer. The tRNA molecule binds across the dimer.

Its subcellular location is the cytoplasm. It carries out the reaction tRNA(Ser) + L-serine + ATP = L-seryl-tRNA(Ser) + AMP + diphosphate + H(+). The enzyme catalyses tRNA(Sec) + L-serine + ATP = L-seryl-tRNA(Sec) + AMP + diphosphate + H(+). Its pathway is aminoacyl-tRNA biosynthesis; selenocysteinyl-tRNA(Sec) biosynthesis; L-seryl-tRNA(Sec) from L-serine and tRNA(Sec): step 1/1. Functionally, catalyzes the attachment of serine to tRNA(Ser). Is also able to aminoacylate tRNA(Sec) with serine, to form the misacylated tRNA L-seryl-tRNA(Sec), which will be further converted into selenocysteinyl-tRNA(Sec). The polypeptide is Serine--tRNA ligase (Mesorhizobium japonicum (strain LMG 29417 / CECT 9101 / MAFF 303099) (Mesorhizobium loti (strain MAFF 303099))).